The sequence spans 800 residues: DNA topoisomerase 4 subunit A (800 aa).

One can recognise a Topo IIA-type catalytic domain in the interval 31 to 495 (LPDVRDGLKP…EIEEIKIDKE (465 aa)). Tyr119 functions as the O-(5'-phospho-DNA)-tyrosine intermediate in the catalytic mechanism.

Belongs to the type II topoisomerase GyrA/ParC subunit family. ParC type 2 subfamily. In terms of assembly, heterotetramer composed of ParC and ParE.

It is found in the cell membrane. It carries out the reaction ATP-dependent breakage, passage and rejoining of double-stranded DNA.. Its function is as follows. Topoisomerase IV is essential for chromosome segregation. It relaxes supercoiled DNA. Performs the decatenation events required during the replication of a circular DNA molecule. This chain is DNA topoisomerase 4 subunit A, found in Staphylococcus aureus (strain MRSA252).